Reading from the N-terminus, the 235-residue chain is Endonuclease V (235 aa).

Mg(2+)-binding residues include Asp47 and Asp117.

The protein belongs to the endonuclease V family. It depends on Mg(2+) as a cofactor.

The protein resides in the cytoplasm. The catalysed reaction is Endonucleolytic cleavage at apurinic or apyrimidinic sites to products with a 5'-phosphate.. In terms of biological role, DNA repair enzyme involved in the repair of deaminated bases. Selectively cleaves double-stranded DNA at the second phosphodiester bond 3' to a deoxyinosine leaving behind the intact lesion on the nicked DNA. The protein is Endonuclease V of Protochlamydia amoebophila (strain UWE25).